The chain runs to 498 residues: ATP synthase subunit alpha, chloroplastic (498 aa).

170 to 177 (GDRQTGKT) provides a ligand contact to ATP.

This sequence belongs to the ATPase alpha/beta chains family. As to quaternary structure, F-type ATPases have 2 components, CF(1) - the catalytic core - and CF(0) - the membrane proton channel. CF(1) has five subunits: alpha(3), beta(3), gamma(1), delta(1), epsilon(1). CF(0) has four main subunits: a, b, b' and c.

The protein resides in the plastid. It is found in the chloroplast thylakoid membrane. The catalysed reaction is ATP + H2O + 4 H(+)(in) = ADP + phosphate + 5 H(+)(out). In terms of biological role, produces ATP from ADP in the presence of a proton gradient across the membrane. The alpha chain is a regulatory subunit. The protein is ATP synthase subunit alpha, chloroplastic of Oltmannsiellopsis viridis (Marine flagellate).